The chain runs to 505 residues: Putative thymidine phosphorylase (505 aa).

The protein belongs to the thymidine/pyrimidine-nucleoside phosphorylase family. Type 2 subfamily.

The catalysed reaction is thymidine + phosphate = 2-deoxy-alpha-D-ribose 1-phosphate + thymine. This Tolumonas auensis (strain DSM 9187 / NBRC 110442 / TA 4) protein is Putative thymidine phosphorylase.